A 376-amino-acid chain; its full sequence is Protein-tyrosine sulfotransferase 2 (376 aa).

Residues 1–8 (MRLSVRKV) lie on the Cytoplasmic side of the membrane. The chain crosses the membrane as a helical; Signal-anchor for type II membrane protein span at residues 9–25 (LLAAGCALALVLAVQLG). At 26–376 (QQVLECRAVL…NSTSPHLGSS (351 aa)) the chain is on the lumenal side. 77 to 81 (RSGTT) provides a ligand contact to 3'-phosphoadenylyl sulfate. Residues C95 and C155 are joined by a disulfide bond. E98 serves as the catalytic Proton donor/acceptor. Residues 100-104 (RIIPR) form an interaction with peptide substrate region. 3'-phosphoadenylyl sulfate contacts are provided by R182, S190, and R194. C224 and C232 are disulfide-bonded. Residues Y237, 284–293 (STDQVIKPVN), and K299 each bind 3'-phosphoadenylyl sulfate. N-linked (GlcNAc...) asparagine glycosylation is found at N342 and N367.

It belongs to the protein sulfotransferase family. As to quaternary structure, homodimer. Can also form heterodimers with TPST1. Post-translationally, N-glycosylated. Widely expressed.

It is found in the golgi apparatus membrane. The catalysed reaction is L-tyrosyl-[protein] + 3'-phosphoadenylyl sulfate = O-sulfo-L-tyrosine-[protein] + adenosine 3',5'-bisphosphate + H(+). Catalyzes the O-sulfation of tyrosine residues within acidic motifs of polypeptides, using 3'-phosphoadenylyl sulfate (PAPS) as cosubstrate. This Mus musculus (Mouse) protein is Protein-tyrosine sulfotransferase 2 (Tpst2).